The primary structure comprises 354 residues: Guanine nucleotide-binding protein alpha-12 subunit (354 aa).

The region spanning 31-354 (QPLKLLLLGS…SLLMNVAEIL (324 aa)) is the G-alpha domain. The segment at 34 to 47 (KLLLLGSGECGKST) is G1 motif. Residues 39-46 (GSGECGKS), 178-184 (LRVRVKT), 203-207 (DVGGQ), 272-275 (NKID), and Ala329 contribute to the GTP site. The Mg(2+) site is built by Ser46 and Thr184. The G2 motif stretch occupies residues 176–184 (DFLRVRVKT). The interval 199-208 (FKLVDVGGQK) is G3 motif. The G4 motif stretch occupies residues 268–275 (VLFFNKID). A G5 motif region spans residues 327–332 (TCALDS).

It belongs to the G-alpha family. As to quaternary structure, g proteins are composed of 3 units; alpha, beta and gamma. The alpha chain contains the guanine nucleotide binding site.

Its function is as follows. Guanine nucleotide-binding proteins (G proteins) are involved as modulators or transducers in various transmembrane signaling systems. The chain is Guanine nucleotide-binding protein alpha-12 subunit (gpaL) from Dictyostelium discoideum (Social amoeba).